A 177-amino-acid chain; its full sequence is Endothelin-2 (177 aa).

Positions 1 to 23 are cleaved as a signal peptide; the sequence is MPTALCSIALALLVALHEGKSQA. Residues 24–45 constitute a propeptide that is removed on maturation; it reads ATTPIPEQPAPLPRARGSHLRT. 2 cysteine pairs are disulfide-bonded: C48-C62 and C50-C58. Positions 69–177 are excised as a propeptide; it reads VNTPGQTAPY…RPTHSRQRKR (109 aa). Residues 95 to 110 form an endothelin-like region; sequence CECYSARDPACATFCH. The interval 155–177 is disordered; it reads HFARQQQKPTRETRPTHSRQRKR.

It belongs to the endothelin/sarafotoxin family. As to expression, expressed in various organs including heart, lung, liver, kidney, gastrointestinal tract, uterus and ovary, but not in spleen. Within the gastrointestinal tract, gene expression was detected in rumen, a ruminant-specific digestive organ, as well as stomach, duodenum and colon.

The protein resides in the secreted. Endothelins are endothelium-derived vasoconstrictor peptides. This is Endothelin-2 (EDN2) from Bos taurus (Bovine).